We begin with the raw amino-acid sequence, 253 residues long: Probable transcriptional regulatory protein KRH_13670 (253 aa).

This sequence belongs to the TACO1 family.

The protein resides in the cytoplasm. This is Probable transcriptional regulatory protein KRH_13670 from Kocuria rhizophila (strain ATCC 9341 / DSM 348 / NBRC 103217 / DC2201).